Consider the following 121-residue polypeptide: Spermidine export protein MdtJ (121 aa).

The next 4 membrane-spanning stretches (helical) occupy residues Met-1–Ser-21, Gly-32–Val-52, Ile-55–Phe-75, and Glu-82–Ile-102.

Belongs to the drug/metabolite transporter (DMT) superfamily. Small multidrug resistance (SMR) (TC 2.A.7.1) family. MdtJ subfamily. As to quaternary structure, forms a complex with MdtI.

It localises to the cell inner membrane. Functionally, catalyzes the excretion of spermidine. This Escherichia coli O139:H28 (strain E24377A / ETEC) protein is Spermidine export protein MdtJ.